Reading from the N-terminus, the 462-residue chain is Ribosomal protein uS12 methylthiotransferase RimO (462 aa).

The 116-residue stretch at 10 to 125 (PRIGMVSLGC…VLDAVHRNLP (116 aa)) folds into the MTTase N-terminal domain. [4Fe-4S] cluster-binding residues include C19, C55, C84, C160, C164, and C167. A Radical SAM core domain is found at 146 to 388 (LTPRHYAYLK…AVAEALSSAK (243 aa)). Positions 390–462 (QRRVGATMQV…RGHDLLAQPI (73 aa)) constitute a TRAM domain.

This sequence belongs to the methylthiotransferase family. RimO subfamily. [4Fe-4S] cluster serves as cofactor.

The protein localises to the cytoplasm. The catalysed reaction is L-aspartate(89)-[ribosomal protein uS12]-hydrogen + (sulfur carrier)-SH + AH2 + 2 S-adenosyl-L-methionine = 3-methylsulfanyl-L-aspartate(89)-[ribosomal protein uS12]-hydrogen + (sulfur carrier)-H + 5'-deoxyadenosine + L-methionine + A + S-adenosyl-L-homocysteine + 2 H(+). Catalyzes the methylthiolation of an aspartic acid residue of ribosomal protein uS12. In Verminephrobacter eiseniae (strain EF01-2), this protein is Ribosomal protein uS12 methylthiotransferase RimO.